We begin with the raw amino-acid sequence, 1486 residues long: Chromosome partition protein MukB (1486 aa).

Gly-34–Ser-41 is an ATP binding site. 3 coiled-coil regions span residues Leu-326–Gln-418, Leu-444–Gln-480, and Arg-509–Val-603. Positions Pro-666–Arg-783 are flexible hinge. 3 coiled-coil regions span residues Glu-835–Glu-923, Glu-977–Ala-1115, and Val-1209–Ser-1266.

This sequence belongs to the SMC family. MukB subfamily. As to quaternary structure, homodimerization via its hinge domain. Binds to DNA via its C-terminal region. Interacts, and probably forms a ternary complex, with MukE and MukF via its C-terminal region. The complex formation is stimulated by calcium or magnesium. Interacts with tubulin-related protein FtsZ.

The protein resides in the cytoplasm. It is found in the nucleoid. Plays a central role in chromosome condensation, segregation and cell cycle progression. Functions as a homodimer, which is essential for chromosome partition. Involved in negative DNA supercoiling in vivo, and by this means organize and compact chromosomes. May achieve or facilitate chromosome segregation by condensation DNA from both sides of a centrally located replisome during cell division. This is Chromosome partition protein MukB from Escherichia coli O6:H1 (strain CFT073 / ATCC 700928 / UPEC).